A 277-amino-acid chain; its full sequence is 3-methyl-2-oxobutanoate hydroxymethyltransferase (277 aa).

2 residues coordinate Mg(2+): aspartate 43 and aspartate 82. Residues 43–44, aspartate 82, and lysine 112 each bind 3-methyl-2-oxobutanoate; that span reads DS. Glutamate 114 provides a ligand contact to Mg(2+). Residue glutamate 181 is the Proton acceptor of the active site.

The protein belongs to the PanB family. Homodecamer; pentamer of dimers. Mg(2+) is required as a cofactor.

Its subcellular location is the cytoplasm. The catalysed reaction is 3-methyl-2-oxobutanoate + (6R)-5,10-methylene-5,6,7,8-tetrahydrofolate + H2O = 2-dehydropantoate + (6S)-5,6,7,8-tetrahydrofolate. It participates in cofactor biosynthesis; (R)-pantothenate biosynthesis; (R)-pantoate from 3-methyl-2-oxobutanoate: step 1/2. In terms of biological role, catalyzes the reversible reaction in which hydroxymethyl group from 5,10-methylenetetrahydrofolate is transferred onto alpha-ketoisovalerate to form ketopantoate. The chain is 3-methyl-2-oxobutanoate hydroxymethyltransferase from Listeria innocua serovar 6a (strain ATCC BAA-680 / CLIP 11262).